The sequence spans 176 residues: MSEVPRFELRNKRKVGKKQKVDIFGDKDDESMLQIDCETDSLISESVSSTHSYEDYSKAYKELTLETPADTNDSTSTIIDSAYEESWYDKTIKDEQTKENKKTDKKLKRIENIKENNQNDSTSMQIAQLSLRIQRIESETKLKTLDSAYNTIITQADNLTTPQKKSLISAILATMR.

It belongs to the rotavirus NSP5 family. Homodimer. Interacts with VP1. Interacts with VP2. Interacts with NSP2 and NSP6. O-glycosylated.

It is found in the host cytoplasm. Functionally, plays an essential role in the viral genome replication. Participates, together with NSP2, in the formation of viral factories (viroplasms) which are large inclusions in the host cytoplasm where replication intermediates are assembled and viral RNA replication takes place. Orchestrates the recruitment of viroplasmic proteins such as capsid proteins to these factories. This chain is Non-structural protein 5, found in Homo sapiens (Human).